The sequence spans 577 residues: Urease subunit alpha (577 aa).

The Urease domain occupies 136-577 (GGIDCHVHFI…LPMAQRYFLF (442 aa)). The Ni(2+) site is built by His-141, His-143, and Lys-224. An N6-carboxylysine modification is found at Lys-224. Substrate is bound at residue His-226. 2 residues coordinate Ni(2+): His-253 and His-279. His-327 serves as the catalytic Proton donor. Residue Asp-367 coordinates Ni(2+).

It belongs to the metallo-dependent hydrolases superfamily. Urease alpha subunit family. In terms of assembly, heterotrimer of UreA (gamma), UreB (beta) and UreC (alpha) subunits. Three heterotrimers associate to form the active enzyme. It depends on Ni cation as a cofactor. Post-translationally, carboxylation allows a single lysine to coordinate two nickel ions.

It is found in the cytoplasm. It catalyses the reaction urea + 2 H2O + H(+) = hydrogencarbonate + 2 NH4(+). Its pathway is nitrogen metabolism; urea degradation; CO(2) and NH(3) from urea (urease route): step 1/1. This Mycobacteroides abscessus (strain ATCC 19977 / DSM 44196 / CCUG 20993 / CIP 104536 / JCM 13569 / NCTC 13031 / TMC 1543 / L948) (Mycobacterium abscessus) protein is Urease subunit alpha.